The following is a 482-amino-acid chain: Chromosomal replication initiator protein DnaA (482 aa).

Positions 1 to 71 (MKQSILFERV…TGLFQAEDPE (71 aa)) are domain I, interacts with DnaA modulators. Positions 71–139 (EILKIEVLVR…ASFGSPLFGS (69 aa)) are domain II. The tract at residues 140 to 362 (PLDSRFTFDT…GAFNQLVFRR (223 aa)) is domain III, AAA+ region. ATP contacts are provided by Gly186, Gly188, Lys189, and Thr190. Residues 363–482 (SFEPNLSIER…VELLKRLINE (120 aa)) form a domain IV, binds dsDNA region.

This sequence belongs to the DnaA family. Oligomerizes as a right-handed, spiral filament on DNA at oriC.

The protein localises to the cytoplasm. Functionally, plays an essential role in the initiation and regulation of chromosomal replication. ATP-DnaA binds to the origin of replication (oriC) to initiate formation of the DNA replication initiation complex once per cell cycle. Binds the DnaA box (a 9 base pair repeat at the origin) and separates the double-stranded (ds)DNA. Forms a right-handed helical filament on oriC DNA; dsDNA binds to the exterior of the filament while single-stranded (ss)DNA is stabiized in the filament's interior. The ATP-DnaA-oriC complex binds and stabilizes one strand of the AT-rich DNA unwinding element (DUE), permitting loading of DNA polymerase. After initiation quickly degrades to an ADP-DnaA complex that is not apt for DNA replication. Binds acidic phospholipids. The protein is Chromosomal replication initiator protein DnaA of Rhizobium johnstonii (strain DSM 114642 / LMG 32736 / 3841) (Rhizobium leguminosarum bv. viciae).